Consider the following 361-residue polypeptide: Histidinol-phosphate aminotransferase (361 aa).

Lysine 220 carries the post-translational modification N6-(pyridoxal phosphate)lysine.

It belongs to the class-II pyridoxal-phosphate-dependent aminotransferase family. Histidinol-phosphate aminotransferase subfamily. In terms of assembly, homodimer. Pyridoxal 5'-phosphate serves as cofactor.

The catalysed reaction is L-histidinol phosphate + 2-oxoglutarate = 3-(imidazol-4-yl)-2-oxopropyl phosphate + L-glutamate. It functions in the pathway amino-acid biosynthesis; L-histidine biosynthesis; L-histidine from 5-phospho-alpha-D-ribose 1-diphosphate: step 7/9. The sequence is that of Histidinol-phosphate aminotransferase from Syntrophus aciditrophicus (strain SB).